The sequence spans 410 residues: 2-hydroxy-5-methyl-1-naphthoate 7-hydroxylase (410 aa).

Cysteine 350 contacts heme.

It belongs to the cytochrome P450 family. Heme serves as cofactor.

It carries out the reaction 2-hydroxy-5-methyl-1-naphthoate + 2 reduced [2Fe-2S]-[ferredoxin] + O2 + 2 H(+) = 2,7-dihydroxy-5-methyl-1-naphthoate + 2 oxidized [2Fe-2S]-[ferredoxin] + H2O. Its pathway is antibiotic biosynthesis. Involved in the biosynthesis of the naphthoic acid (NA) moiety in the chromophore of the enedyine antitumor antibiotic neocarzinostatin (NCS). Catalyzes the hydroxylation at C-7 position of 2-hydroxy-5-methyl-1-naphthoate to yield 2,7-dihydroxy-5-methyl-1-naphthoate. The polypeptide is 2-hydroxy-5-methyl-1-naphthoate 7-hydroxylase (Streptomyces carzinostaticus).